A 270-amino-acid polypeptide reads, in one-letter code: Replication protein A 32 kDa subunit (270 aa).

Met-1 bears the N-acetylmethionine mark. Phosphoserine; by PRKDC occurs at positions 4 and 8. Thr-21 is modified (phosphothreonine; by PRKDC). The disordered stretch occupies residues 21-41; the sequence is TQSPGGFGSPAPSQAEKKSRA. The residue at position 23 (Ser-23) is a Phosphoserine; by CDK2. Ser-29 is modified (phosphoserine; by CDK1). Phosphoserine; by PRKDC is present on Ser-33. Residues Lys-37 and Lys-38 each participate in a glycyl lysine isopeptide (Lys-Gly) (interchain with G-Cter in ubiquitin) cross-link. Positions 74–148 form a DNA-binding region, OB; that stretch reads VTIVGIIRHA…KSLVAFKIMP (75 aa). The interval 187 to 270 is interaction with RAD52, TIPIN, UNG and XPA; that stretch reads GMSEAGNFGG…DDHFKSTDAE (84 aa).

Belongs to the replication factor A protein 2 family. As to quaternary structure, component of the replication protein A complex (RPA/RP-A), a heterotrimeric complex composed of RPA1, RPA2 and RPA3. Interacts with PRPF19; the PRP19-CDC5L complex is recruited to the sites of DNA repair where it ubiquitinates the replication protein A complex (RPA). Interacts with SERTAD3. Interacts with TIPIN. Interacts with TIMELESS. Interacts with PPP4R2; the interaction is direct, DNA damage-dependent and mediates the recruitment of the PP4 catalytic subunit PPP4C. Interacts (hyperphosphorylated) with RAD51. Interacts with SMARCAL1; the interaction is direct and mediates the recruitment to the RPA complex of SMARCAL1. Interacts with RAD52 and XPA; those interactions are direct and associate RAD52 and XPA to the RPA complex. Interacts with FBH1. Interacts with ETAA1; the interaction is direct and promotes ETAA1 recruitment at stalled replication forks. Interacts with RFWD3. Interacts with DDI2. Interacts (in unphosphorylated form via N-terminus) with EIF4EBP3; the interaction enhances EIF4EBP3-mediated inhibition of EIF4E-mediated mRNA nuclear export. Interacts with BRIP1/FANCJ via the RPA1 subunit; following DNA damage they colocalize in foci in the nucleus. Interacts with nuclear UNG (isoform 2); this interaction mediates UNG recruitment to RPA-coated single-stranded DNA at stalled replication forks. Differentially phosphorylated throughout the cell cycle, becoming phosphorylated at the G1-S transition and dephosphorylated in late mitosis. Mainly phosphorylated at Ser-23 and Ser-29, by cyclin A-CDK2 and cyclin B-CDK1, respectively during DNA replication and mitosis. Dephosphorylation may require the serine/threonine-protein phosphatase 4. Phosphorylation at Ser-23 and Ser-29 is a prerequisite for further phosphorylation. Becomes hyperphosphorylated on additional residues including Ser-4, Ser-8, Thr-21 and Ser-33 in response to DNA damage. Hyperphosphorylation is mediated by ATM, ATR and PRKDC. Primarily recruited to DNA repair nuclear foci as a hypophosphorylated form it undergoes subsequent hyperphosphorylation, catalyzed by ATR. Hyperphosphorylation is required for RAD51 recruitment to chromatin and efficient DNA repair. Phosphorylation at Thr-21 depends upon RFWD3 presence. In terms of processing, DNA damage-induced 'Lys-63'-linked polyubiquitination by PRPF19 mediates ATRIP recruitment to the RPA complex at sites of DNA damage and activation of ATR. Ubiquitinated by RFWD3 at stalled replication forks in response to DNA damage: ubiquitination by RFWD3 does not lead to degradation by the proteasome and promotes removal of the RPA complex from stalled replication forks, promoting homologous recombination.

The protein resides in the nucleus. It is found in the PML body. Its function is as follows. As part of the heterotrimeric replication protein A complex (RPA/RP-A), binds and stabilizes single-stranded DNA intermediates that form during DNA replication or upon DNA stress. It prevents their reannealing and in parallel, recruits and activates different proteins and complexes involved in DNA metabolism. Thereby, it plays an essential role both in DNA replication and the cellular response to DNA damage. In the cellular response to DNA damage, the RPA complex controls DNA repair and DNA damage checkpoint activation. Through recruitment of ATRIP activates the ATR kinase a master regulator of the DNA damage response. It is required for the recruitment of the DNA double-strand break repair factors RAD51 and RAD52 to chromatin in response to DNA damage. Also recruits to sites of DNA damage proteins like XPA and XPG that are involved in nucleotide excision repair and is required for this mechanism of DNA repair. Also plays a role in base excision repair (BER) probably through interaction with UNG. Also recruits SMARCAL1/HARP, which is involved in replication fork restart, to sites of DNA damage. May also play a role in telomere maintenance. RPA stimulates 5'-3' helicase activity of BRIP1/FANCJ. The polypeptide is Replication protein A 32 kDa subunit (RPA2) (Homo sapiens (Human)).